Here is a 487-residue protein sequence, read N- to C-terminus: Glutamyl-tRNA(Gln) amidotransferase subunit A (487 aa).

Active-site charge relay system residues include Lys-80 and Ser-155. Ser-179 acts as the Acyl-ester intermediate in catalysis.

It belongs to the amidase family. GatA subfamily. In terms of assembly, heterotrimer of A, B and C subunits.

It catalyses the reaction L-glutamyl-tRNA(Gln) + L-glutamine + ATP + H2O = L-glutaminyl-tRNA(Gln) + L-glutamate + ADP + phosphate + H(+). In terms of biological role, allows the formation of correctly charged Gln-tRNA(Gln) through the transamidation of misacylated Glu-tRNA(Gln) in organisms which lack glutaminyl-tRNA synthetase. The reaction takes place in the presence of glutamine and ATP through an activated gamma-phospho-Glu-tRNA(Gln). In Leptospira interrogans serogroup Icterohaemorrhagiae serovar copenhageni (strain Fiocruz L1-130), this protein is Glutamyl-tRNA(Gln) amidotransferase subunit A.